A 504-amino-acid polypeptide reads, in one-letter code: Doublesex- and mab-3-related transcription factor A1 (504 aa).

Residues 1–13 (MERSQCGSRDRGV) show a composition bias toward basic and acidic residues. The disordered stretch occupies residues 1–27 (MERSQCGSRDRGVSGRPHLAPGLVVAA). Positions 97-144 (CARCRNHGVVSALKGHKRFCRWRDCACAKCTLIAERQRVMAAQVALRR) form a DNA-binding region, DM. Disordered regions lie at residues 170 to 192 (GRAS…AAGA) and 266 to 307 (SISE…NESE). Positions 293-306 (RSLSSSDLESGNES) are enriched in low complexity. The 36-residue stretch at 327–362 (RDPLDILTKIFPNYRRSRLEGILRFCKGDVVQAIEQ) folds into the DMA domain.

Belongs to the DMRT family. In terms of tissue distribution, expressed in liver, kidney, pancreas, prostate and weakly detected in testis and ovary.

Its subcellular location is the nucleus. The sequence is that of Doublesex- and mab-3-related transcription factor A1 (DMRTA1) from Homo sapiens (Human).